We begin with the raw amino-acid sequence, 644 residues long: Phosphomethylpyrimidine synthase (644 aa).

Substrate-binding positions include asparagine 236, methionine 265, tyrosine 294, histidine 330, serine 350 to glycine 352, aspartate 391 to arginine 394, and glutamate 430. Histidine 434 provides a ligand contact to Zn(2+). Tyrosine 457 provides a ligand contact to substrate. Residue histidine 498 participates in Zn(2+) binding. 3 residues coordinate [4Fe-4S] cluster: cysteine 578, cysteine 581, and cysteine 586.

Belongs to the ThiC family. As to quaternary structure, homodimer. Requires [4Fe-4S] cluster as cofactor.

It catalyses the reaction 5-amino-1-(5-phospho-beta-D-ribosyl)imidazole + S-adenosyl-L-methionine = 4-amino-2-methyl-5-(phosphooxymethyl)pyrimidine + CO + 5'-deoxyadenosine + formate + L-methionine + 3 H(+). It participates in cofactor biosynthesis; thiamine diphosphate biosynthesis. In terms of biological role, catalyzes the synthesis of the hydroxymethylpyrimidine phosphate (HMP-P) moiety of thiamine from aminoimidazole ribotide (AIR) in a radical S-adenosyl-L-methionine (SAM)-dependent reaction. In Aliivibrio fischeri (strain ATCC 700601 / ES114) (Vibrio fischeri), this protein is Phosphomethylpyrimidine synthase.